A 295-amino-acid polypeptide reads, in one-letter code: Bifunctional protein FolD (295 aa).

Residues 166–168 (GRS), S195, and I236 each bind NADP(+).

Belongs to the tetrahydrofolate dehydrogenase/cyclohydrolase family. As to quaternary structure, homodimer.

It catalyses the reaction (6R)-5,10-methylene-5,6,7,8-tetrahydrofolate + NADP(+) = (6R)-5,10-methenyltetrahydrofolate + NADPH. The enzyme catalyses (6R)-5,10-methenyltetrahydrofolate + H2O = (6R)-10-formyltetrahydrofolate + H(+). It participates in one-carbon metabolism; tetrahydrofolate interconversion. Functionally, catalyzes the oxidation of 5,10-methylenetetrahydrofolate to 5,10-methenyltetrahydrofolate and then the hydrolysis of 5,10-methenyltetrahydrofolate to 10-formyltetrahydrofolate. The protein is Bifunctional protein FolD of Chlorobium chlorochromatii (strain CaD3).